Here is a 654-residue protein sequence, read N- to C-terminus: Fructose-1,6-bisphosphatase class 3 (654 aa).

The tract at residues 288–307 (NPAFKPKKRPDKHERLTQRE) is disordered. The span at 298–307 (DKHERLTQRE) shows a compositional bias: basic and acidic residues.

Belongs to the FBPase class 3 family. It depends on Mn(2+) as a cofactor.

The enzyme catalyses beta-D-fructose 1,6-bisphosphate + H2O = beta-D-fructose 6-phosphate + phosphate. Its pathway is carbohydrate biosynthesis; gluconeogenesis. In Staphylococcus aureus (strain MSSA476), this protein is Fructose-1,6-bisphosphatase class 3.